Reading from the N-terminus, the 265-residue chain is Undecaprenyl-diphosphatase (265 aa).

Transmembrane regions (helical) follow at residues Met-1–Ile-21, Gln-39–Phe-59, Trp-86–Ile-106, Ser-112–Ala-132, Leu-140–Ile-160, Phe-186–Leu-206, Val-219–Ile-239, and Met-244–Phe-264.

It belongs to the UppP family.

It localises to the cell inner membrane. The enzyme catalyses di-trans,octa-cis-undecaprenyl diphosphate + H2O = di-trans,octa-cis-undecaprenyl phosphate + phosphate + H(+). Catalyzes the dephosphorylation of undecaprenyl diphosphate (UPP). Confers resistance to bacitracin. This Saccharophagus degradans (strain 2-40 / ATCC 43961 / DSM 17024) protein is Undecaprenyl-diphosphatase.